The primary structure comprises 1306 residues: Angiotensin-converting enzyme (1306 aa).

A signal peptide spans 1 to 29 (MGAASGRRGPGLLLPLPLLLLLPPQPALA). The Extracellular segment spans residues 30–1256 (LDPGLQPGNF…GLDLDAQQAR (1227 aa)). Residues Asn38, Asn54, Asn74, Glu103, Asn111, Ile121, Tyr140, Asn146, and Asn160 are each glycosylated (N-linked (GlcNAc...) asparagine). 2 consecutive Peptidase M2 domains span residues 40 to 624 (SADE…LGWP) and 643 to 1222 (VTDE…LGWP). Cys157 and Cys165 are disulfide-bonded. Position 231 (Tyr231) interacts with chloride. 2 N-linked (GlcNAc...) asparagine glycosylation sites follow: Asn318 and Asn368. The cysteines at positions 359 and 377 are disulfide-linked. Residue His390 coordinates Zn(2+). Catalysis depends on Glu391, which acts as the Proton acceptor 1. Zn(2+) is bound by residues His394, Pro414, Glu418, and Arg442. N-linked (GlcNAc...) asparagine glycans are attached at residues Asn445 and Asn509. His520 functions as the Proton donor 1 in the catalytic mechanism. Chloride is bound at residue Arg529. Cys545 and Cys557 form a disulfide bridge. N-linked (GlcNAc...) asparagine glycosylation is found at Asn617 and Asn677. 2 N-linked (GlcNAc...) (complex) asparagine glycosylation sites follow: Asn695 and Asn714. Cys757 and Cys763 are oxidised to a cystine. N-linked (GlcNAc...) asparagine; partial glycosylation is present at Asn760. Residues Arg791 and Tyr829 each contribute to the chloride site. An N-linked (GlcNAc...) asparagine; partial glycan is attached at Asn942. Cys957 and Cys975 are disulfide-bonded. Zn(2+) is bound at residue His988. Glu989 acts as the Proton acceptor 2 in catalysis. Zn(2+) contacts are provided by His992 and Glu1016. Positions 1090 and 1094 each coordinate chloride. Catalysis depends on His1118, which acts as the Proton donor 2. A chloride-binding site is contributed by Arg1127. A disulfide bridge connects residues Cys1143 and Cys1155. An N-linked (GlcNAc...) asparagine; partial glycan is attached at Asn1191. The segment at 1215-1256 (HGEKLGWPQYNWTPNSARSEGPLPDSGRVSFLGLDLDAQQAR) is juxtamembrane stalk. A helical membrane pass occupies residues 1257–1277 (VGQWLLLFLGIALLVATLGLS). Residues 1278–1306 (QRLFSIRHRSLHRHSHGPQFGSEVELRHS) lie on the Cytoplasmic side of the membrane. Ser1299 is subject to Phosphoserine.

It belongs to the peptidase M2 family. In terms of assembly, monomer and homodimer; homodimerizes following binding to an inhibitor. Interacts with calmodulin (CALM1, CALM2 or CALM3); interaction takes place in the cytoplasmic region and regulates phosphorylation and proteolytic cleavage. The cofactor is Zn(2+). Chloride serves as cofactor. Produced following proteolytic cleavage by secretase enzymes that cleave the transmembrane form in the juxtamembrane stalk region upstream of the transmembrane region. Cleavage can take place at different sites of the juxtamembrane stalk region. Post-translationally, phosphorylated by CK2 on Ser-1299; which allows membrane retention. Phosphorylated on tyrosine residues on its extracellular part, promoting cleavage by secretase enzymes and formation of the soluble form (Angiotensin-converting enzyme, soluble form). In terms of tissue distribution, ubiquitously expressed, with highest levels in lung, kidney, heart, gastrointestinal system and prostate. As to expression, specifically expressed in spermatocytes and adult testis.

It is found in the cell membrane. The protein resides in the cytoplasm. It localises to the secreted. It carries out the reaction Release of a C-terminal dipeptide, oligopeptide-|-Xaa-Yaa, when Xaa is not Pro, and Yaa is neither Asp nor Glu. Thus, conversion of angiotensin I to angiotensin II, with increase in vasoconstrictor activity, but no action on angiotensin II.. The catalysed reaction is angiotensin I + H2O = L-histidyl-L-leucine + angiotensin II. The enzyme catalyses bradykinin + H2O = L-Phe-L-Arg + bradykinin(1-7). It catalyses the reaction substance P + H2O = substance P(1-9) + L-Leu-L-Met-NH2. It carries out the reaction substance P + H2O = substance P(1-8) + Gly-L-Leu-L-Met-NH2. The catalysed reaction is substance P + H2O = L-Phe-L-Phe-Gly-L-Leu-L-Met-NH2 + substance P(1-6). The enzyme catalyses neurotensin + H2O = neurotensin(1-11) + L-isoleucyl-L-leucine. It catalyses the reaction goralatide + H2O = N-acetyl-L-seryl-L-aspartate + L-lysyl-L-proline. It carries out the reaction Met-enkephalin + H2O = L-phenylalanyl-L-methionine + L-tyrosylglycylglycine. The catalysed reaction is Leu-enkephalin + H2O = L-tyrosylglycylglycine + L-phenylalanyl-L-leucine. The enzyme catalyses Met-enkephalin-Arg-Phe + H2O = L-arginyl-L-phenylalanine + Met-enkephalin. The dipeptidyl carboxypeptidase activity is strongly activated by chloride. The dipeptidyl carboxypeptidase activity is specifically inhibited by lisinopril, captopril and enalaprilat. Its activity is regulated as follows. Strongly inhibited by lisinopril and captopril. In terms of biological role, dipeptidyl carboxypeptidase that removes dipeptides from the C-terminus of a variety of circulating hormones, such as angiotensin I, bradykinin or enkephalins, thereby playing a key role in the regulation of blood pressure, electrolyte homeostasis or synaptic plasticity. Composed of two similar catalytic domains, each possessing a functional active site, with different selectivity for substrates. Plays a major role in the angiotensin-renin system that regulates blood pressure and sodium retention by the kidney by converting angiotensin I to angiotensin II, resulting in an increase of the vasoconstrictor activity of angiotensin. Also able to inactivate bradykinin, a potent vasodilator, and therefore enhance the blood pressure response. Acts as a regulator of synaptic transmission by mediating cleavage of neuropeptide hormones, such as substance P, neurotensin or enkephalins. Catalyzes degradation of different enkephalin neuropeptides (Met-enkephalin, Leu-enkephalin, Met-enkephalin-Arg-Phe and possibly Met-enkephalin-Arg-Gly-Leu). Acts as a regulator of synaptic plasticity in the nucleus accumbens of the brain by mediating cleavage of Met-enkephalin-Arg-Phe, a strong ligand of Mu-type opioid receptor OPRM1, into Met-enkephalin. Met-enkephalin-Arg-Phe cleavage by ACE decreases activation of OPRM1, leading to long-term synaptic potentiation of glutamate release. Also acts as a regulator of hematopoietic stem cell differentiation by mediating degradation of hemoregulatory peptide N-acetyl-SDKP (AcSDKP). Acts as a regulator of cannabinoid signaling pathway by mediating degradation of hemopressin, an antagonist peptide of the cannabinoid receptor CNR1. Involved in amyloid-beta metabolism by catalyzing degradation of Amyloid-beta protein 40 and Amyloid-beta protein 42 peptides, thereby preventing plaque formation. Catalyzes cleavage of cholecystokinin (maturation of Cholecystokinin-8 and Cholecystokinin-5) and Gonadoliberin-1 (both maturation and degradation) hormones. Degradation of hemoregulatory peptide N-acetyl-SDKP (AcSDKP) and amyloid-beta proteins is mediated by the N-terminal catalytic domain, while angiotensin I and cholecystokinin cleavage is mediated by the C-terminal catalytic region. Functionally, soluble form that is released in blood plasma and other body fluids following proteolytic cleavage in the juxtamembrane stalk region. Isoform produced by alternative promoter usage that is specifically expressed in spermatocytes and adult testis, and which is required for male fertility. In contrast to somatic isoforms, only contains one catalytic domain. Acts as a dipeptidyl carboxypeptidase that removes dipeptides from the C-terminus of substrates. The identity of substrates that are needed for male fertility is unknown. May also have a glycosidase activity which releases GPI-anchored proteins from the membrane by cleaving the mannose linkage in the GPI moiety. The GPIase activity was reported to be essential for the egg-binding ability of the sperm. This activity is however unclear and has been challenged by other groups, suggesting that it may be indirect. In Homo sapiens (Human), this protein is Angiotensin-converting enzyme.